We begin with the raw amino-acid sequence, 329 residues long: NAC domain-containing protein 71 (329 aa).

In terms of domain architecture, NAC spans 9–166 (LPPGFRFHPT…DWVLCRIYNK (158 aa)). The segment at 228 to 281 (RSGSADRDSMPRLHTDSSGSEHVLSPSPSPDDFPGGGDHDYAESQPSGGCGGWP) is disordered. The span at 230–242 (GSADRDSMPRLHT) shows a compositional bias: basic and acidic residues.

Interacts with NAC048 and NAC002. As to expression, expressed in roots and embryo. Weakly expressed in callus.

It localises to the nucleus. Its function is as follows. Transcription activator that binds to the promoter of the stress response gene LEA19. Involved in tolerance to abiotic stresses. The polypeptide is NAC domain-containing protein 71 (Oryza sativa subsp. japonica (Rice)).